Here is a 214-residue protein sequence, read N- to C-terminus: Uridine kinase (214 aa).

11-18 (GGSGSGKT) contributes to the ATP binding site.

This sequence belongs to the uridine kinase family.

The protein localises to the cytoplasm. The catalysed reaction is uridine + ATP = UMP + ADP + H(+). It carries out the reaction cytidine + ATP = CMP + ADP + H(+). Its pathway is pyrimidine metabolism; CTP biosynthesis via salvage pathway; CTP from cytidine: step 1/3. It participates in pyrimidine metabolism; UMP biosynthesis via salvage pathway; UMP from uridine: step 1/1. This Brevibacillus brevis (strain 47 / JCM 6285 / NBRC 100599) protein is Uridine kinase.